A 58-amino-acid chain; its full sequence is KappaPI-actitoxin-Avd3b (58 aa).

Residues 5–55 enclose the BPTI/Kunitz inhibitor domain; the sequence is CLLPMDVGRCRASHPRYYYNSSSKRCEKFIYGGCRGNANNFHTLEECEKVC. Intrachain disulfides connect Cys5–Cys55, Cys14–Cys38, and Cys30–Cys51.

Belongs to the venom Kunitz-type family. Sea anemone type 2 potassium channel toxin subfamily.

The protein resides in the secreted. Its subcellular location is the nematocyst. Functionally, dual-function toxin that inhibits both the serine protease trypsin (Kd&lt;30 nM) and voltage-gated potassium channels Kv1.2/KCNA2 (IC(50)=2800 nM). The sequence is that of KappaPI-actitoxin-Avd3b from Anemonia sulcata (Mediterranean snakelocks sea anemone).